The following is a 461-amino-acid chain: MINAWAQIEHTLRDNLNPGLFKVWIKPLAAEQAGDSLRLVAPNAFVASWVRDRLMNEIEKAAASVLGSVPTITVVSGEEPAAAPRPVQVPAQKRPAAARTSGAEQMGLPLHYASRSADSIKWMHSFDEFVVGPSNQMAFAASQDICQQSFRSDTLFLSSDPGLGKTHLLHAVGQQLCNISNRTLPRVEYLTAEEFATRLICALKAKEVDRFKARYRDVDVLLLEDVHFLQGKQRMQDEVLSTVKALQSRGAKVLFSSSFAPKDLNDLDSQLTSRFCSGLLAVIEKPTFETRKQILREKARLHHVQLPEQVADLLADNIRADVRQIESCLRNLLLKARLLNQQITMDMAWEIIGHYAKREAVLDIDAIVRQICSGFDISKEQLQSRSRRRELVIARNTAFFLARKHTDLSLEEIGKRFNRKHSTVIKGIANIEREMNKETPLGRQVVNAVNMVERNGRIIHP.

Residues 1-68 are domain I, interacts with DnaA modulators; it reads MINAWAQIEH…EKAAASVLGS (68 aa). The tract at residues 68–118 is domain II; sequence SVPTITVVSGEEPAAAPRPVQVPAQKRPAAARTSGAEQMGLPLHYASRSAD. Residues 119-336 are domain III, AAA+ region; that stretch reads SIKWMHSFDE…SCLRNLLLKA (218 aa). Positions 162, 164, 165, and 166 each coordinate ATP. The tract at residues 337-461 is domain IV, binds dsDNA; that stretch reads RLLNQQITMD…VERNGRIIHP (125 aa).

The protein belongs to the DnaA family. As to quaternary structure, oligomerizes as a right-handed, spiral filament on DNA at oriC.

It localises to the cytoplasm. Functionally, plays an essential role in the initiation and regulation of chromosomal replication. ATP-DnaA binds to the origin of replication (oriC) to initiate formation of the DNA replication initiation complex once per cell cycle. Binds the DnaA box (a 9 base pair repeat at the origin) and separates the double-stranded (ds)DNA. Forms a right-handed helical filament on oriC DNA; dsDNA binds to the exterior of the filament while single-stranded (ss)DNA is stabiized in the filament's interior. The ATP-DnaA-oriC complex binds and stabilizes one strand of the AT-rich DNA unwinding element (DUE), permitting loading of DNA polymerase. After initiation quickly degrades to an ADP-DnaA complex that is not apt for DNA replication. Binds acidic phospholipids. This is Chromosomal replication initiator protein DnaA from Oleidesulfovibrio alaskensis (strain ATCC BAA-1058 / DSM 17464 / G20) (Desulfovibrio alaskensis).